A 333-amino-acid polypeptide reads, in one-letter code: Aquaporin-1 (333 aa).

Residues 1 to 26 (MQKMSEKPLYRAAENPTRNADRRAGR) are disordered. 2 helical membrane-spanning segments follow: residues 85–105 (LAMFLFMSLLLGGAATAHFTG) and 116–136 (FHGFSAVFGIYVGAGVSGGII). The short motif at 137 to 139 (NPA) is the NPA 1 element. Transmembrane regions (helical) follow at residues 156-176 (LVLVSAQYFGSFIASAVVYLI), 213-233 (TGAIFNQIFCTMLLSIGFLSI), and 245-265 (LFPFAVGLLIMTVFLAFSYSA). Residues 270 to 272 (NPA) carry the NPA 2 motif. A helical membrane pass occupies residues 303-323 (WLFPYVGALFGAVMYQIFVGV).

Belongs to the MIP/aquaporin (TC 1.A.8) family.

Its subcellular location is the cell membrane. In terms of biological role, aquaglyceroporin that may modulate the water content and osmolytes during anhydrobiosis. The protein is Aquaporin-1 of Milnesium tardigradum (Water bear).